Here is a 689-residue protein sequence, read N- to C-terminus: Armadillo-like helical domain-containing protein 3 (689 aa).

Residues 520–538 (IFQLALQVVNLFNMFITYG) form a helical membrane-spanning segment.

Belongs to the ARMH3 family.

It is found in the golgi apparatus membrane. Its subcellular location is the cytoplasm. May be involved in Golgi maintenance and protein secretion. The protein is Armadillo-like helical domain-containing protein 3 of Danio rerio (Zebrafish).